Consider the following 842-residue polypeptide: Elongation factor 2 (842 aa).

In terms of domain architecture, tr-type G spans threonine 17 to valine 346. GTP contacts are provided by residues alanine 26–serine 33, asparagine 158–aspartate 161, and serine 213–leucine 215. Lysine 509 is modified (N6,N6,N6-trimethyllysine; by EFM3; alternate). Lysine 509 is subject to N6,N6-dimethyllysine; by EFM3; alternate. N6-methyllysine; by EFM3; alternate is present on lysine 509. At serine 579 the chain carries Phosphoserine. N6,N6-dimethyllysine; by EFM2; alternate is present on lysine 613. Residue lysine 613 is modified to N6-methyllysine; by EFM2; alternate. Histidine 699 is modified (diphthamide). Phosphothreonine occurs at positions 713 and 763. Lysine 841 participates in a covalent cross-link: Glycyl lysine isopeptide (Lys-Gly) (interchain with G-Cter in ubiquitin).

It belongs to the TRAFAC class translation factor GTPase superfamily. Classic translation factor GTPase family. EF-G/EF-2 subfamily. Binds to 80S ribosomes. Actively translating ribosomes show mutually exclusive binding of eIF5a (HYP2 or ANB1) and EFT1/eEF2. Interacts with the 40S ribosomal subunit protein RPL9A; the interaction is direct. Interacts with the 60S ribosomal subunit proteins RPL12A; the interaction is direct. Interacts with RPS23A; the interaction is direct. Interacts with 18S rRNA; the interaction is direct. Interacts with 25S rRNA; the interaction is direct. Interacts with RPL0. Interacts with STM1; promoting ribosome inactivation. Post-translationally, (Microbial infection) Diphthamide can be ADP-ribosylated by diphtheria toxin and by Pseudomonas exotoxin A, thus abolishing its function.

It localises to the cytoplasm. It catalyses the reaction GTP + H2O = GDP + phosphate + H(+). It participates in protein biosynthesis; polypeptide chain elongation. Inhibited by fusidic acid and sordarin, which prevent the release of eEF2 from the ribosome after the translocation step. While fusidic acid acts on all eukaryotic eEF2, sordarin specifically binds and inhibits only selected fungal eEF2. Catalyzes the GTP-dependent ribosomal translocation step during translation elongation. During this step, the ribosome changes from the pre-translocational (PRE) to the post-translocational (POST) state as the newly formed A-site-bound peptidyl-tRNA and P-site-bound deacylated tRNA move to the P and E sites, respectively. Catalyzes the coordinated movement of the two tRNA molecules, the mRNA and conformational changes in the ribosome. The sequence is that of Elongation factor 2 (EFT1) from Saccharomyces cerevisiae (strain ATCC 204508 / S288c) (Baker's yeast).